Reading from the N-terminus, the 310-residue chain is Delta(1)-pyrroline-2-carboxylate reductase 1 (310 aa).

Belongs to the ornithine cyclodeaminase/mu-crystallin family.

The enzyme catalyses L-proline + NAD(+) = 1-pyrroline-2-carboxylate + NADH + H(+). The catalysed reaction is L-proline + NADP(+) = 1-pyrroline-2-carboxylate + NADPH + H(+). Its function is as follows. Catalyzes the reduction of Delta(1)-pyrroline-2-carboxylate (Pyr2C) to L-proline, using NADPH as the electron donor. May be involved in a degradation pathway that converts trans-3-hydroxy-L-proline (t3LHyp) to L-proline. This Burkholderia multivorans (strain ATCC 17616 / 249) protein is Delta(1)-pyrroline-2-carboxylate reductase 1.